The chain runs to 186 residues: NADH-dependent FMN reductase SfnF (186 aa).

The protein belongs to the SsuE family.

The catalysed reaction is FMNH2 + NAD(+) = FMN + NADH + 2 H(+). Its function is as follows. Involved in the dimethyl sulfide degradation pathway. Catalyzes the NADH-dependent reduction of FMN. In Pseudomonas putida (Arthrobacter siderocapsulatus), this protein is NADH-dependent FMN reductase SfnF.